The sequence spans 408 residues: Neutral cholesterol ester hydrolase 1 (408 aa).

Topologically, residues 1–4 are cytoplasmic; it reads MRSS. The chain crosses the membrane as a helical; Signal-anchor for type II membrane protein span at residues 5–25; the sequence is CVLLAALLALVAYYVYIPLPS. Residues 26 to 408 lie on the Lumenal side of the membrane; the sequence is AVSDPWKLML…SYFKWLDQNL (383 aa). The Involved in the stabilization of the negatively charged intermediate by the formation of the oxyanion hole motif lies at 113 to 115; the sequence is HGG. Residue serine 191 is part of the active site. Residue asparagine 270 is glycosylated (N-linked (GlcNAc...) asparagine). Aspartate 348 is a catalytic residue. Asparagine 367 carries N-linked (GlcNAc...) asparagine glycosylation. Residue histidine 378 is part of the active site. Residue asparagine 389 is glycosylated (N-linked (GlcNAc...) asparagine).

Belongs to the 'GDXG' lipolytic enzyme family. N-glycosylated.

It is found in the cell membrane. It localises to the microsome. It catalyses the reaction a 1-O-alkyl-2-acetyl-sn-glycerol + H2O = a 1-O-alkyl-sn-glycerol + acetate + H(+). It carries out the reaction 1-O-hexadecyl-2-acetyl-sn-glycerol + H2O = 1-O-hexadecyl-sn-glycerol + acetate + H(+). The enzyme catalyses a cholesterol ester + H2O = cholesterol + a fatty acid + H(+). The catalysed reaction is cholesteryl (9Z-octadecenoate) + H2O = cholesterol + (9Z)-octadecenoate + H(+). In terms of biological role, hydrolyzes 2-acetyl monoalkylglycerol ether (1-O-alkyl-2-acetyl-sn-glycerol), the penultimate precursor of the pathway for de novo synthesis of platelet-activating factor. May be responsible for the hydrolysis of cholesterol esters (such as cholesteryl (9Z-octadecenoate)) in macrophages. Also involved in organ detoxification by hydrolyzing exogenous organophosphorus compounds. In Rattus norvegicus (Rat), this protein is Neutral cholesterol ester hydrolase 1 (Nceh1).